A 427-amino-acid chain; its full sequence is Probable G-protein coupled receptor 150 (427 aa).

Residues 1 to 3 lie on the Extracellular side of the membrane; it reads MED. A helical membrane pass occupies residues 4 to 24; it reads PFSLAILNPASNLSVPTQPSW. At 25 to 50 the chain is on the cytoplasmic side; sequence SLNLTSEQGASVPGPHSPPRGPPSHR. The chain crosses the membrane as a helical span at residues 51-71; that stretch reads IHLVFLGIILVAAVAGNTTVL. At 72-89 the chain is on the extracellular side; the sequence is CRLCGGSSGPWPGPKRRK. A helical membrane pass occupies residues 90-110; it reads MDFLLVQLAAADLYASGGTAL. Residues 111 to 170 are Cytoplasmic-facing; it reads SQLAWELLGDPRPALGDLACRLSHLLQASGRGASAHLVALIALERQLAVRIPQGPQLPAR. Residues 171 to 191 form a helical membrane-spanning segment; that stretch reads ALAALSWLLALLLALPPTFVV. The Extracellular portion of the chain corresponds to 192 to 230; sequence RWDAPPSSTANAWPGKHCCRGIFAPLPRWHLQVYALYEA. Residues 231 to 251 traverse the membrane as a helical segment; it reads IVGFAAPVALLGFSCGHLLCV. Over 252 to 286 the chain is Cytoplasmic; sequence WWQRGSQAPVARMPWSPSMARASLPSALPQAKVQS. The helical transmembrane segment at 287 to 307 threads the bilayer; it reads LKMSLALALLFVGCDLPYFAA. The Extracellular segment spans residues 308–327; that stretch reads RLAAAWSSKPAGDWERESLV. Residues 328–348 form a helical membrane-spanning segment; it reads AAMRVLEVANSAINPLIYLFF. The Cytoplasmic portion of the chain corresponds to 349 to 427; that stretch reads QAGDCRLWRR…PPPCSCESAF (79 aa). The interval 402-427 is disordered; that stretch reads EERNQGCLRPPPPRPRPPPCSCESAF. The span at 410-421 shows a compositional bias: pro residues; it reads RPPPPRPRPPPC.

The protein belongs to the G-protein coupled receptor 1 family.

Its subcellular location is the cell membrane. Orphan receptor. This Mus musculus (Mouse) protein is Probable G-protein coupled receptor 150 (Gpr150).